A 373-amino-acid polypeptide reads, in one-letter code: GDP-mannose 4,6-dehydratase (373 aa).

Residues 10 to 15 (GITGQD), 65 to 66 (DL), 87 to 91 (LGAQS), and tyrosine 102 each bind NADP(+). The active site involves threonine 134. Active-site nucleophile residues include glutamate 136 and tyrosine 158. NADP(+) contacts are provided by lysine 162, histidine 188, and arginine 193.

The protein belongs to the NAD(P)-dependent epimerase/dehydratase family. GDP-mannose 4,6-dehydratase subfamily. NADP(+) serves as cofactor.

The enzyme catalyses GDP-alpha-D-mannose = GDP-4-dehydro-alpha-D-rhamnose + H2O. Its function is as follows. Catalyzes the conversion of GDP-D-mannose to GDP-4-dehydro-6-deoxy-D-mannose. This Vibrio cholerae serotype O1 (strain ATCC 39315 / El Tor Inaba N16961) protein is GDP-mannose 4,6-dehydratase.